A 252-amino-acid polypeptide reads, in one-letter code: Imidazole glycerol phosphate synthase subunit HisF (252 aa).

Residues D11 and D130 contribute to the active site.

The protein belongs to the HisA/HisF family. In terms of assembly, heterodimer of HisH and HisF.

The protein resides in the cytoplasm. The enzyme catalyses 5-[(5-phospho-1-deoxy-D-ribulos-1-ylimino)methylamino]-1-(5-phospho-beta-D-ribosyl)imidazole-4-carboxamide + L-glutamine = D-erythro-1-(imidazol-4-yl)glycerol 3-phosphate + 5-amino-1-(5-phospho-beta-D-ribosyl)imidazole-4-carboxamide + L-glutamate + H(+). It functions in the pathway amino-acid biosynthesis; L-histidine biosynthesis; L-histidine from 5-phospho-alpha-D-ribose 1-diphosphate: step 5/9. In terms of biological role, IGPS catalyzes the conversion of PRFAR and glutamine to IGP, AICAR and glutamate. The HisF subunit catalyzes the cyclization activity that produces IGP and AICAR from PRFAR using the ammonia provided by the HisH subunit. This chain is Imidazole glycerol phosphate synthase subunit HisF, found in Bacillus licheniformis (strain ATCC 14580 / DSM 13 / JCM 2505 / CCUG 7422 / NBRC 12200 / NCIMB 9375 / NCTC 10341 / NRRL NRS-1264 / Gibson 46).